A 28-amino-acid chain; its full sequence is Potassium channel toxin alpha-KTx 9.7 (28 aa).

Intrachain disulfides connect cysteine 3/cysteine 19, cysteine 6/cysteine 24, and cysteine 10/cysteine 26.

As to expression, expressed by the venom gland.

The protein resides in the secreted. Its function is as follows. Calcium channel activator. Rapidly and reversibly activates ryanodine receptor 1 (RYR1). The protein is Potassium channel toxin alpha-KTx 9.7 of Hottentotta judaicus (Black scorpion).